Here is a 118-residue protein sequence, read N- to C-terminus: Large ribosomal subunit protein eL22 (118 aa).

The protein belongs to the eukaryotic ribosomal protein eL22 family.

The sequence is that of Large ribosomal subunit protein eL22 (RPL22) from Tetrahymena thermophila (strain SB210).